A 1543-amino-acid polypeptide reads, in one-letter code: DNA-directed RNA polymerase subunit beta' (1543 aa).

The Zn(2+) site is built by cysteine 60, cysteine 62, cysteine 75, and cysteine 78. Residues aspartate 627, aspartate 629, and aspartate 631 each coordinate Mg(2+). Residues cysteine 1017, cysteine 1097, cysteine 1104, and cysteine 1107 each contribute to the Zn(2+) site. Disordered stretches follow at residues 1466–1490 (PADR…APPR) and 1522–1543 (AEEG…EENV).

This sequence belongs to the RNA polymerase beta' chain family. As to quaternary structure, the RNAP catalytic core consists of 2 alpha, 1 beta, 1 beta' and 1 omega subunit. When a sigma factor is associated with the core the holoenzyme is formed, which can initiate transcription. Mg(2+) serves as cofactor. Zn(2+) is required as a cofactor.

It catalyses the reaction RNA(n) + a ribonucleoside 5'-triphosphate = RNA(n+1) + diphosphate. In terms of biological role, DNA-dependent RNA polymerase catalyzes the transcription of DNA into RNA using the four ribonucleoside triphosphates as substrates. In Herpetosiphon aurantiacus (strain ATCC 23779 / DSM 785 / 114-95), this protein is DNA-directed RNA polymerase subunit beta'.